The following is an 869-amino-acid chain: Probable beta-glucosidase F (869 aa).

Residues 1–19 (MRVLSAIALVASLASSALS) form the signal peptide. Residues asparagine 77 and asparagine 261 are each glycosylated (N-linked (GlcNAc...) asparagine). Aspartate 289 is a catalytic residue. Residues asparagine 332, asparagine 364, asparagine 399, and asparagine 478 are each glycosylated (N-linked (GlcNAc...) asparagine). Positions 677–697 (STYPPTRPPKGPTPTYPTAIP) are disordered. A compositionally biased stretch (pro residues) spans 681–691 (PTRPPKGPTPT). Asparagine 728 carries an N-linked (GlcNAc...) asparagine glycan.

This sequence belongs to the glycosyl hydrolase 3 family.

The protein resides in the secreted. It catalyses the reaction Hydrolysis of terminal, non-reducing beta-D-glucosyl residues with release of beta-D-glucose.. It functions in the pathway glycan metabolism; cellulose degradation. Beta-glucosidases are one of a number of cellulolytic enzymes involved in the degradation of cellulosic biomass. Catalyzes the last step releasing glucose from the inhibitory cellobiose. This chain is Probable beta-glucosidase F (bglF), found in Aspergillus fumigatus (strain ATCC MYA-4609 / CBS 101355 / FGSC A1100 / Af293) (Neosartorya fumigata).